Consider the following 347-residue polypeptide: Probable G-protein coupled receptor 148 (347 aa).

Residues 1-51 are Extracellular-facing; the sequence is MGDELAPCPVGTTAWPALIQLISKTPCMPQAASNTSLGLGDLRVPSSMLYW. Asparagine 34 is a glycosylation site (N-linked (GlcNAc...) asparagine). Residues 52–72 form a helical membrane-spanning segment; the sequence is LFLPSSLLAAATLAVSPLLLV. Over 73–85 the chain is Cytoplasmic; sequence TILRNQRLRQEPH. A helical membrane pass occupies residues 86–106; that stretch reads YLLPANILLSDLAYILLHMLI. Residues 107–130 are Extracellular-facing; that stretch reads SSSSLGGWELGRMACGILTDAVFA. The helical transmembrane segment at 131–151 threads the bilayer; that stretch reads ACTSTILSFTAIVLHTYLAVI. The Cytoplasmic portion of the chain corresponds to 152 to 165; sequence HPLRYLSFMSHGAA. Residues 166–186 form a helical membrane-spanning segment; the sequence is WKAVALIWLVACCFPTFLIWL. The Extracellular segment spans residues 187–214; it reads SKWQDAQLEEQGASYILPPSMGTQPGCG. A helical transmembrane segment spans residues 215–235; the sequence is LLVIVTYTSILCVLFLCTALI. Over 236–261 the chain is Cytoplasmic; that stretch reads ANCFWRIYAEAKTSGIWGQGYSRARG. A helical transmembrane segment spans residues 262 to 282; it reads TLLIHSVLITLYVSTGVVFSL. Residues 283-299 lie on the Extracellular side of the membrane; that stretch reads DMVLTRYHHIDSGTHTW. A helical membrane pass occupies residues 300–322; it reads LLAANSEVLMMLPRAMLTYLYLL. Residues 323-347 lie on the Cytoplasmic side of the membrane; sequence RYRQLLGMVRGHLPSRRHQAIFTIS.

It belongs to the G-protein coupled receptor 1 family. As to expression, expression restricted to nervous system and testis. Is also detected in several tumors types, most notably prostate cancer.

Its subcellular location is the cell membrane. In terms of biological role, orphan receptor. The protein is Probable G-protein coupled receptor 148 (GPR148) of Homo sapiens (Human).